The sequence spans 239 residues: Geranylgeranylglyceryl phosphate synthase (239 aa).

Mg(2+) is bound by residues aspartate 18 and serine 45. Residues 166-172 (YLEAGSG), 197-198 (GG), and 219-220 (GT) contribute to the sn-glycerol 1-phosphate site.

It belongs to the GGGP/HepGP synthase family. Group II subfamily. The cofactor is Mg(2+).

It is found in the cytoplasm. It carries out the reaction sn-glycerol 1-phosphate + (2E,6E,10E)-geranylgeranyl diphosphate = sn-3-O-(geranylgeranyl)glycerol 1-phosphate + diphosphate. Its pathway is membrane lipid metabolism; glycerophospholipid metabolism. Its function is as follows. Prenyltransferase that catalyzes the transfer of the geranylgeranyl moiety of geranylgeranyl diphosphate (GGPP) to the C3 hydroxyl of sn-glycerol-1-phosphate (G1P). This reaction is the first ether-bond-formation step in the biosynthesis of archaeal membrane lipids. The protein is Geranylgeranylglyceryl phosphate synthase of Pyrobaculum aerophilum (strain ATCC 51768 / DSM 7523 / JCM 9630 / CIP 104966 / NBRC 100827 / IM2).